A 29-amino-acid polypeptide reads, in one-letter code: Chassatide C1 (29 aa).

Positions 1-29 form a cross-link, cyclopeptide (Gly-Asn); the sequence is GDACGETCFTGICFTAGCSCNPWPTCTRN. Cystine bridges form between Cys-4/Cys-18, Cys-8/Cys-20, and Cys-13/Cys-26.

This is a cyclic peptide. Expressed in leaf, fruit, pedical and stem but not in root (at protein level).

Functionally, probably participates in a plant defense mechanism. In Chassalia chartacea (Chassalia curviflora), this protein is Chassatide C1.